A 276-amino-acid polypeptide reads, in one-letter code: Orotidine 5'-phosphate decarboxylase (276 aa).

The Proton donor role is filled by Lys96.

Belongs to the OMP decarboxylase family. Type 2 subfamily.

The catalysed reaction is orotidine 5'-phosphate + H(+) = UMP + CO2. It functions in the pathway pyrimidine metabolism; UMP biosynthesis via de novo pathway; UMP from orotate: step 2/2. The chain is Orotidine 5'-phosphate decarboxylase from Porphyromonas gingivalis (strain ATCC 33277 / DSM 20709 / CIP 103683 / JCM 12257 / NCTC 11834 / 2561).